Reading from the N-terminus, the 154-residue chain is 6,7-dimethyl-8-ribityllumazine synthase (154 aa).

Residues Phe21, 55–57 (AFE), and 79–81 (CVI) each bind 5-amino-6-(D-ribitylamino)uracil. Position 84 to 85 (84 to 85 (AT)) interacts with (2S)-2-hydroxy-3-oxobutyl phosphate. Residue His87 is the Proton donor of the active site. 5-amino-6-(D-ribitylamino)uracil is bound at residue Phe112. Arg126 contributes to the (2S)-2-hydroxy-3-oxobutyl phosphate binding site.

Belongs to the DMRL synthase family. As to quaternary structure, forms an icosahedral capsid composed of 60 subunits, arranged as a dodecamer of pentamers.

The enzyme catalyses (2S)-2-hydroxy-3-oxobutyl phosphate + 5-amino-6-(D-ribitylamino)uracil = 6,7-dimethyl-8-(1-D-ribityl)lumazine + phosphate + 2 H2O + H(+). It participates in cofactor biosynthesis; riboflavin biosynthesis; riboflavin from 2-hydroxy-3-oxobutyl phosphate and 5-amino-6-(D-ribitylamino)uracil: step 1/2. Functionally, catalyzes the formation of 6,7-dimethyl-8-ribityllumazine by condensation of 5-amino-6-(D-ribitylamino)uracil with 3,4-dihydroxy-2-butanone 4-phosphate. This is the penultimate step in the biosynthesis of riboflavin. This chain is 6,7-dimethyl-8-ribityllumazine synthase, found in Staphylococcus aureus (strain Newman).